The chain runs to 388 residues: AdoMet-dependent heme synthase (388 aa).

Residues 1 to 12 (MHNANHPHGNGH) are compositionally biased toward low complexity. A disordered region spans residues 1–29 (MHNANHPHGNGHPAEKKGMGAHSGAMNMP). The Radical SAM core domain maps to 34–257 (DGSPACRLIA…TSMHLKATCA (224 aa)). [4Fe-4S] cluster contacts are provided by cysteine 50, cysteine 54, and cysteine 57.

Belongs to the radical SAM superfamily. [4Fe-4S] cluster serves as cofactor.

It carries out the reaction Fe-coproporphyrin III + 2 S-adenosyl-L-methionine = heme b + 2 5'-deoxyadenosine + 2 L-methionine + 2 CO2. It participates in porphyrin-containing compound metabolism; protoheme biosynthesis. Involved in siroheme-dependent heme b biosynthesis. Catalyzes the conversion of Fe-coproporphyrin III into heme by the oxidative decarboxylation of two propionate side chains. This Oleidesulfovibrio alaskensis (strain ATCC BAA-1058 / DSM 17464 / G20) (Desulfovibrio alaskensis) protein is AdoMet-dependent heme synthase.